We begin with the raw amino-acid sequence, 404 residues long: Phosphoglycerate kinase (404 aa).

Substrate contacts are provided by residues 22–24, arginine 37, 60–63, arginine 119, and arginine 156; these read DLN and HLGR. ATP is bound by residues lysine 206, glycine 302, glutamate 333, and 359 to 362; that span reads GGDS.

This sequence belongs to the phosphoglycerate kinase family. Monomer.

It is found in the cytoplasm. It catalyses the reaction (2R)-3-phosphoglycerate + ATP = (2R)-3-phospho-glyceroyl phosphate + ADP. The protein operates within carbohydrate degradation; glycolysis; pyruvate from D-glyceraldehyde 3-phosphate: step 2/5. This chain is Phosphoglycerate kinase, found in Clavibacter sepedonicus (Clavibacter michiganensis subsp. sepedonicus).